Here is a 459-residue protein sequence, read N- to C-terminus: MAAMKTTPGLVNFFIFNSTYGPREGEEHEKIILYIPTEEDIDRKIKTIGLCEALVKFTETFAPDKPCESLHTQKSRQIFYQPEPDFWMIMTISIPFSEKIAKDGKNTIEYHYDDVLDNVLDAVLKQSYKMFKLFNGPFNYLSETYGREALKKRSEYFFLSYLQTLNFSSFDLLDIFAGIQFLPLDKNTFLKIQSFVNLIEHTFSQIKYTAFLYSDKLVWSGLEQEDMRILYKYLVTSLFPATIDSELADRSSQGYVVIQPKSHHGRFVTGPPDLKDIPTPRKPPRIFVNTDTEQEELLLICYKALDATICLLVSAPFPTLDFFKKLDMFIGPQLTTLANVICEQSSKKSLSSDQQYRYIYFNHMNLAQKSTIHSKKASVAGVSPEIMRLLGDISADFNSFQEDGETYVKTMSDCWVVGRKSDQREFFVILNQKSANLIEINEEVKKLSSCHFNNIFFMD.

It belongs to the CCZ1 family.

This chain is Vacuolar fusion protein CCZ1 homolog, found in Nematostella vectensis (Starlet sea anemone).